The primary structure comprises 60 residues: UPF0337 protein SSP1134 (60 aa).

The interval 1–41 (MADENKFEQAKGNVKETVGNVTDNKELENEGKEDKTSGKAK) is disordered. Over residues 23–41 (DNKELENEGKEDKTSGKAK) the composition is skewed to basic and acidic residues.

The protein belongs to the UPF0337 (CsbD) family.

The protein is UPF0337 protein SSP1134 of Staphylococcus saprophyticus subsp. saprophyticus (strain ATCC 15305 / DSM 20229 / NCIMB 8711 / NCTC 7292 / S-41).